The sequence spans 650 residues: Phosphatidylinositol-3,5-bisphosphate 3-phosphatase MTMR14 (650 aa).

The disordered stretch occupies residues 1-27 (MAGARAAAAAASAGSSASSGNQPPQEL). At lysine 194 the chain carries N6-acetyllysine. Asparagine 226 carries N-linked (GlcNAc...) asparagine glycosylation. Residue cysteine 330 is the Phosphocysteine intermediate of the active site. Glycine 333, tryptophan 334, aspartate 335, arginine 336, and arginine 382 together coordinate a 1,2-diacyl-sn-glycero-3-phospho-(1D-myo-inositol-3,5-bisphosphate). Glycine 333, tryptophan 334, aspartate 335, arginine 336, and arginine 382 together coordinate a 1,2-diacyl-sn-glycero-3-phospho-(1D-myo-inositol-3-phosphate). Residues 476–546 (AAWRKSHSSS…PRSVDHPLPG (71 aa)) are disordered. Serine 518 is subject to Phosphoserine. N-linked (GlcNAc...) asparagine glycosylation is present at asparagine 519. Residues serine 530, serine 580, and serine 624 each carry the phosphoserine modification. Omega-N-methylarginine is present on arginine 638.

Belongs to the protein-tyrosine phosphatase family. Non-receptor class myotubularin subfamily. In terms of tissue distribution, expressed in various tissues, including heart, skeletal muscle, placenta, liver, lung, kidney and pancreas.

The protein resides in the cytoplasm. The enzyme catalyses a 1,2-diacyl-sn-glycero-3-phospho-(1D-myo-inositol-3,5-bisphosphate) + H2O = a 1,2-diacyl-sn-glycero-3-phospho-(1D-myo-inositol-5-phosphate) + phosphate. It carries out the reaction a 1,2-diacyl-sn-glycero-3-phospho-(1D-myo-inositol-3-phosphate) + H2O = a 1,2-diacyl-sn-glycero-3-phospho-(1D-myo-inositol) + phosphate. Lipid phosphatase that specifically dephosphorylates the D-3 position of phosphatidylinositol 3-phosphate and phosphatidylinositol 3,5-bisphosphate, generating phosphatidylinositol and phosphatidylinositol 5-phosphate. This Homo sapiens (Human) protein is Phosphatidylinositol-3,5-bisphosphate 3-phosphatase MTMR14.